A 261-amino-acid chain; its full sequence is 3-methyl-2-oxobutanoate hydroxymethyltransferase (261 aa).

The Mg(2+) site is built by Asp42 and Asp81. 3-methyl-2-oxobutanoate is bound by residues 42-43 (DS), Asp81, and Lys110. Glu112 contributes to the Mg(2+) binding site. Residue Glu179 is the Proton acceptor of the active site.

Belongs to the PanB family. As to quaternary structure, homodecamer; pentamer of dimers. It depends on Mg(2+) as a cofactor.

Its subcellular location is the cytoplasm. The catalysed reaction is 3-methyl-2-oxobutanoate + (6R)-5,10-methylene-5,6,7,8-tetrahydrofolate + H2O = 2-dehydropantoate + (6S)-5,6,7,8-tetrahydrofolate. It functions in the pathway cofactor biosynthesis; coenzyme A biosynthesis. In terms of biological role, catalyzes the reversible reaction in which hydroxymethyl group from 5,10-methylenetetrahydrofolate is transferred onto alpha-ketoisovalerate to form ketopantoate. This chain is 3-methyl-2-oxobutanoate hydroxymethyltransferase, found in Pyrobaculum neutrophilum (strain DSM 2338 / JCM 9278 / NBRC 100436 / V24Sta) (Thermoproteus neutrophilus).